The chain runs to 309 residues: Chronophin (309 aa).

D25 (nucleophile) is an active-site residue. Mg(2+)-binding residues include D25 and D27. D27 acts as the Proton donor in catalysis. Residues 58-60 (SNN), H178, and K209 contribute to the substrate site. D234 contributes to the Mg(2+) binding site.

Belongs to the HAD-like hydrolase superfamily. As to quaternary structure, homodimer. Mg(2+) serves as cofactor.

It localises to the cytoplasm. The protein localises to the cytosol. It is found in the cytoskeleton. Its subcellular location is the cell projection. The protein resides in the ruffle membrane. It localises to the lamellipodium membrane. The protein localises to the cell membrane. It carries out the reaction pyridoxal 5'-phosphate + H2O = pyridoxal + phosphate. The catalysed reaction is pyridoxine 5'-phosphate + H2O = pyridoxine + phosphate. The enzyme catalyses pyridoxamine + phosphate = pyridoxamine 5'-phosphate + H2O. It catalyses the reaction O-phospho-L-seryl-[protein] + H2O = L-seryl-[protein] + phosphate. Functionally, functions as a pyridoxal phosphate (PLP) phosphatase, which also catalyzes the dephosphorylation of pyridoxine 5'-phosphate (PNP) and pyridoxamine 5'-phosphate (PMP), with order of substrate preference PLP &gt; PNP &gt; PMP and therefore plays a role in vitamin B6 metabolism. Also functions as a protein serine phosphatase that specifically dephosphorylates 'Ser-3' in proteins of the actin-depolymerizing factor (ADF)/cofilin family like CFL1 and DSTN. Thereby, regulates cofilin-dependent actin cytoskeleton reorganization, being required for normal progress through mitosis and normal cytokinesis. Does not dephosphorylate phosphothreonines in LIMK1. Does not dephosphorylate peptides containing phosphotyrosine. The protein is Chronophin of Rattus norvegicus (Rat).